Consider the following 169-residue polypeptide: MYNVGKIVNTHGLIGEIRVIATTDFPEERFQVGNTVYLFEKNSKKPEKLIIRSHRKHKNFDLLMFEGLTGIHQVERMKEGVLKIKETQQTDLEENEFYFHEIIGCTVVTTDGEELGEIIEILTPGANDVWVVKGADKKEKLIPYIADVVKEINTNDKKITIEVMEGLLD.

One can recognise a PRC barrel domain in the interval 94–167; the sequence is ENEFYFHEII…KITIEVMEGL (74 aa).

Belongs to the RimM family. As to quaternary structure, binds ribosomal protein uS19.

The protein localises to the cytoplasm. Functionally, an accessory protein needed during the final step in the assembly of 30S ribosomal subunit, possibly for assembly of the head region. Essential for efficient processing of 16S rRNA. May be needed both before and after RbfA during the maturation of 16S rRNA. It has affinity for free ribosomal 30S subunits but not for 70S ribosomes. This chain is Ribosome maturation factor RimM, found in Listeria welshimeri serovar 6b (strain ATCC 35897 / DSM 20650 / CCUG 15529 / CIP 8149 / NCTC 11857 / SLCC 5334 / V8).